The following is a 364-amino-acid chain: Probable secreted lipase phiG (364 aa).

Positions 1-18 (MMPFMDLILSILVSSVLL) are cleaved as a signal peptide. Residue Asn49 is glycosylated (N-linked (GlcNAc...) asparagine). The active-site Nucleophile is the Ser203. Asn262 is a glycosylation site (N-linked (GlcNAc...) asparagine).

This sequence belongs to the AB hydrolase superfamily.

It localises to the secreted. It carries out the reaction a carboxylic ester + H2O = an alcohol + a carboxylate + H(+). Part of the gene cluster that mediates the biosynthesis of the antihypercholesterolemic agents phomoidrides which are dimeric anhydrides. The function of phiG within the pathway has still to be determined. The pathway begins with the highly reducing polyketide synthase phiA that catalyzes the formation of a C12-fatty acyl-ACP, starting from one acetate and 5 malonate units. The hydrolase phiM is involved in the release of the C12-fatty acyl chain from phiA. The alkylcitrate synthase (ACS) phiJ and the alkylcitrate dehydratase (ACDH) phiI then give rise to decarboxylated monomeric anhydrides by coupling the C12-fatty acyl chain with oxalacetic acid. The cyclase phiC is responsible for the dimerization of the monomeric anhydrides which leads to the production of prephomoidride that contains the characteristic bicyclo[4.3.1]deca-1,6-diene system of phomoidrides. Iterative oxidation catalyzed by the alpha-ketoglutarate-dependent dioxygenase phiK produced then phomoidride A. Finally, the methyltransferase phiE converts phomoidride A to phomoidride B via an acetalization reaction. The phosphatidylethanolamine-binding protein phiB and phiN are not essential for dimerization and their functions have still to be determined. This Fungal sp. (strain ATCC 74256) protein is Probable secreted lipase phiG.